Consider the following 425-residue polypeptide: Stabilizer of axonemal microtubules 4 (425 aa).

Disordered stretches follow at residues 259–297 (RGSD…YQPP) and 315–335 (NKEP…SYEQ). Positions 260 to 272 (GSDRDTGYSRVSE) are enriched in basic and acidic residues. The segment covering 277–290 (PRMPTPSSQPTSMS) has biased composition (low complexity). The span at 321 to 332 (FTLNNPSYVRSS) shows a compositional bias: polar residues.

Microtubule inner protein component of sperm flagellar doublet microtubules. Interacts with PPP1CA. In terms of tissue distribution, expressed in brain, ovaries and testis. Expressed in the tracheal epithelium and in secondary spermatocytes and spermatids present in the seminiferous tubule. Expressed in ependymal cells lining the ventricular walls of the brain.

It is found in the cell projection. Its subcellular location is the cilium. The protein localises to the cytoplasm. The protein resides in the cytoskeleton. It localises to the flagellum axoneme. The sequence is that of Stabilizer of axonemal microtubules 4 from Rattus norvegicus (Rat).